Reading from the N-terminus, the 340-residue chain is S-adenosylmethionine:tRNA ribosyltransferase-isomerase (340 aa).

This sequence belongs to the QueA family. In terms of assembly, monomer.

The protein localises to the cytoplasm. It catalyses the reaction 7-aminomethyl-7-carbaguanosine(34) in tRNA + S-adenosyl-L-methionine = epoxyqueuosine(34) in tRNA + adenine + L-methionine + 2 H(+). Its pathway is tRNA modification; tRNA-queuosine biosynthesis. Transfers and isomerizes the ribose moiety from AdoMet to the 7-aminomethyl group of 7-deazaguanine (preQ1-tRNA) to give epoxyqueuosine (oQ-tRNA). This is S-adenosylmethionine:tRNA ribosyltransferase-isomerase from Campylobacter concisus (strain 13826).